The sequence spans 283 residues: NAD kinase (283 aa).

The active-site Proton acceptor is the Asp67. Residues 67 to 68 (DG), Arg72, 136 to 137 (NE), Lys147, Arg164, Asp166, 177 to 182 (TAYSMS), and Gln236 each bind NAD(+).

Belongs to the NAD kinase family. The cofactor is a divalent metal cation.

The protein localises to the cytoplasm. The catalysed reaction is NAD(+) + ATP = ADP + NADP(+) + H(+). Involved in the regulation of the intracellular balance of NAD and NADP, and is a key enzyme in the biosynthesis of NADP. Catalyzes specifically the phosphorylation on 2'-hydroxyl of the adenosine moiety of NAD to yield NADP. This Methanothermobacter thermautotrophicus (strain ATCC 29096 / DSM 1053 / JCM 10044 / NBRC 100330 / Delta H) (Methanobacterium thermoautotrophicum) protein is NAD kinase.